The chain runs to 1845 residues: Helicase swr-1 (1845 aa).

The span at 1–13 shows a compositional bias: polar residues; that stretch reads MTTMMTDSGTASD. Positions 1–329 are disordered; that stretch reads MTTMMTDSGT…GASRATPRIK (329 aa). Residues 24–38 show a composition bias toward low complexity; sequence NDTTTTTTTTTTPGD. Residues 63 to 84 are compositionally biased toward polar residues; sequence SKSYSSTHHVPAIDNTSTTNAN. Low complexity predominate over residues 98-108; it reads SPLSSISSPLS. Over residues 168–180 the composition is skewed to basic and acidic residues; that stretch reads PKPESPPWKKFEA. Over residues 216-243 the composition is skewed to polar residues; it reads AIQTSPVSNKSSASTSRKPAPASSSNSK. Composition is skewed to pro residues over residues 248 to 258 and 283 to 292; these read KMPPPPPPPKA and PRRPATPPKP. The 76-residue stretch at 418 to 493 folds into the HSA domain; the sequence is PEAEEEPPRQ…EMEASKAKWR (76 aa). 2 disordered regions span residues 539–713 and 749–935; these read QKLQ…LFFG and ELQV…TVKT. Over residues 549 to 565 the composition is skewed to acidic residues; it reads DGDEITDEDEDEDDEDL. The segment covering 574–585 has biased composition (basic and acidic residues); it reads GDEKESDEHSDQ. 2 stretches are compositionally biased toward acidic residues: residues 586 to 608 and 663 to 704; these read GSDEMSDENDEDEDEDNMSSSED and NDDD…DDEP. Composition is skewed to polar residues over residues 762–777 and 815–834; these read TNGTHTNEQLASSQTE and TNDSSLKYPNEIVQSENQTL. Over residues 888–897 the composition is skewed to low complexity; that stretch reads SQSQTQSPKT. Residues 898–909 show a composition bias toward basic and acidic residues; the sequence is TDTKPTDVDTPH. The segment covering 922-933 has biased composition (polar residues); it reads RQSSPQPTTPTV. The Helicase ATP-binding domain maps to 957 to 1122; it reads AGLYANNTNG…WSLLYFLAPP (166 aa). ATP is bound at residue 970 to 977; that stretch reads DEMGLGKT. A DEAH box motif is present at residues 1073–1076; sequence DEAH. A Helicase C-terminal domain is found at 1510 to 1660; sequence ALDKLLRKLQ…DVVIQEGEFT (151 aa). Disordered regions lie at residues 1702-1724, 1751-1783, and 1816-1845; these read TTGAGGYDGTADGGGGASQPPVR, QDEADFGEAGSTRPGTPGDGLADLDGQLLGGEE, and LEGTPLELPRDRKKGRDRNRNRKGKDSRKR. Positions 1704–1718 are enriched in gly residues; that stretch reads GAGGYDGTADGGGGA. Residues 1769-1781 show a composition bias toward low complexity; that stretch reads DGLADLDGQLLGG. A compositionally biased stretch (basic residues) spans 1826–1845; it reads DRKKGRDRNRNRKGKDSRKR.

The protein belongs to the SNF2/RAD54 helicase family. SWR1 subfamily. Component of the SWR1 chromatin-remodeling complex.

It localises to the nucleus. The enzyme catalyses ATP + H2O = ADP + phosphate + H(+). Catalytic component of the SWR1 complex which mediates the ATP-dependent exchange of histone H2A for the H2A variant H2A.Z leading to transcriptional regulation of selected genes by chromatin remodeling. The protein is Helicase swr-1 (crf1-1) of Neurospora crassa (strain ATCC 24698 / 74-OR23-1A / CBS 708.71 / DSM 1257 / FGSC 987).